Consider the following 214-residue polypeptide: 3-isopropylmalate dehydratase small subunit (214 aa).

This sequence belongs to the LeuD family. LeuD type 1 subfamily. As to quaternary structure, heterodimer of LeuC and LeuD.

It catalyses the reaction (2R,3S)-3-isopropylmalate = (2S)-2-isopropylmalate. Its pathway is amino-acid biosynthesis; L-leucine biosynthesis; L-leucine from 3-methyl-2-oxobutanoate: step 2/4. Catalyzes the isomerization between 2-isopropylmalate and 3-isopropylmalate, via the formation of 2-isopropylmaleate. The polypeptide is 3-isopropylmalate dehydratase small subunit (Pseudomonas putida (strain W619)).